The chain runs to 194 residues: Segregation and condensation protein B (194 aa).

Belongs to the ScpB family. In terms of assembly, homodimer. Homodimerization may be required to stabilize the binding of ScpA to the Smc head domains. Component of a cohesin-like complex composed of ScpA, ScpB and the Smc homodimer, in which ScpA and ScpB bind to the head domain of Smc. The presence of the three proteins is required for the association of the complex with DNA.

The protein resides in the cytoplasm. Functionally, participates in chromosomal partition during cell division. May act via the formation of a condensin-like complex containing Smc and ScpA that pull DNA away from mid-cell into both cell halves. The polypeptide is Segregation and condensation protein B (Streptococcus agalactiae serotype Ia (strain ATCC 27591 / A909 / CDC SS700)).